A 372-amino-acid chain; its full sequence is UDP-N-acetylglucosamine--N-acetylmuramyl-(pentapeptide) pyrophosphoryl-undecaprenol N-acetylglucosamine transferase (372 aa).

UDP-N-acetyl-alpha-D-glucosamine-binding positions include 16-18 (TGG), asparagine 128, arginine 164, serine 192, isoleucine 250, and glutamine 295.

This sequence belongs to the glycosyltransferase 28 family. MurG subfamily.

It localises to the cell inner membrane. The enzyme catalyses di-trans,octa-cis-undecaprenyl diphospho-N-acetyl-alpha-D-muramoyl-L-alanyl-D-glutamyl-meso-2,6-diaminopimeloyl-D-alanyl-D-alanine + UDP-N-acetyl-alpha-D-glucosamine = di-trans,octa-cis-undecaprenyl diphospho-[N-acetyl-alpha-D-glucosaminyl-(1-&gt;4)]-N-acetyl-alpha-D-muramoyl-L-alanyl-D-glutamyl-meso-2,6-diaminopimeloyl-D-alanyl-D-alanine + UDP + H(+). The protein operates within cell wall biogenesis; peptidoglycan biosynthesis. In terms of biological role, cell wall formation. Catalyzes the transfer of a GlcNAc subunit on undecaprenyl-pyrophosphoryl-MurNAc-pentapeptide (lipid intermediate I) to form undecaprenyl-pyrophosphoryl-MurNAc-(pentapeptide)GlcNAc (lipid intermediate II). The chain is UDP-N-acetylglucosamine--N-acetylmuramyl-(pentapeptide) pyrophosphoryl-undecaprenol N-acetylglucosamine transferase from Paraburkholderia phytofirmans (strain DSM 17436 / LMG 22146 / PsJN) (Burkholderia phytofirmans).